A 337-amino-acid chain; its full sequence is MDLDVVNMFVIAGGTLAIPILAFVASFLLWPSALIRIYYWYWRRTLGMQVRYVHHEDYQFCYSFRGRPGHKPSVLMLHGFSAHKDMWLSVVKFLPKNLHLVCVDMPGHEGTTRSSLDDLSIVGQVKRIHQFVECLKLNKKPFHLIGTSMGGNVAGVYAAYYPSDVCSLSLVCPAGLQYSTDNRFVQRLKELEDSAATQKIPLIPSTPEEMSEMLQLCSYVRFKVPQQILQGLVDVRIPHNSFYRKLFLEIVSEKSRYSLHENMDKIKVPTQIIWGKQDQVLDVSGADILAKSITNSQVEVLENCGHSVVMERPRKTAKLVVDFLASVHNPDNNKKLN.

Residues 1–8 (MDLDVVNM) are Extracellular-facing. The helical; Signal-anchor for type II membrane protein transmembrane segment at 9–29 (FVIAGGTLAIPILAFVASFLL) threads the bilayer. Over 30–337 (WPSALIRIYY…HNPDNNKKLN (308 aa)) the chain is Cytoplasmic. The active-site Nucleophile is Ser148. Residues Asp278 and His306 each act as charge relay system in the active site.

Belongs to the AB hydrolase superfamily.

It localises to the late endosome membrane. It is found in the lysosome membrane. The protein localises to the mitochondrion membrane. The enzyme catalyses Hydrolyzes glycerol monoesters of long-chain fatty acids.. It catalyses the reaction 1-octanoylglycerol + H2O = octanoate + glycerol + H(+). It carries out the reaction 1-decanoylglycerol + H2O = decanoate + glycerol + H(+). The catalysed reaction is 1-dodecanoylglycerol + H2O = dodecanoate + glycerol + H(+). The enzyme catalyses 1-tetradecanoylglycerol + H2O = tetradecanoate + glycerol + H(+). It catalyses the reaction 2-hexadecanoylglycerol + H2O = glycerol + hexadecanoate + H(+). It carries out the reaction 2-(9Z-octadecenoyl)-glycerol + H2O = glycerol + (9Z)-octadecenoate + H(+). The catalysed reaction is 1-(9Z-octadecenoyl)-glycerol + H2O = glycerol + (9Z)-octadecenoate + H(+). The enzyme catalyses 2-(9Z,12Z-octadecadienoyl)-glycerol + H2O = (9Z,12Z)-octadecadienoate + glycerol + H(+). It catalyses the reaction 2-(5Z,8Z,11Z,14Z-eicosatetraenoyl)-glycerol + H2O = glycerol + (5Z,8Z,11Z,14Z)-eicosatetraenoate + H(+). It carries out the reaction 1-(5Z,8Z,11Z,14Z-eicosatetraenoyl)-glycerol + H2O = glycerol + (5Z,8Z,11Z,14Z)-eicosatetraenoate + H(+). The catalysed reaction is 1-(9Z,12Z-octadecadienoyl)-glycerol + H2O = (9Z,12Z)-octadecadienoate + glycerol + H(+). The enzyme catalyses 3-(9Z-octadecenoyl)-sn-glycero-1-phospho-(3'-(9Z-octadecenoyl)-1'-sn-glycerol) + H2O = 3-(9Z-octadecenoyl)-sn-glycero-1-phospho-(1'-sn-glycerol) + (9Z)-octadecenoate + H(+). It catalyses the reaction (S,S)-2-(9Z-octadecenoyl)-sn-glycero-1-phospho-(2'-(9Z-octadecenoyl)-1'-sn-glycerol) + H2O = (S,S)-2-(9Z-octadecenoyl)-sn-glycero-1-phospho-(1'-sn-glycerol) + (9Z)-octadecenoate + H(+). It carries out the reaction (R,R)-2-(9Z-octadecenoyl)-sn-glycero-3-phospho-(2'-(9Z-octadecenoyl)-3'-sn-glycerol) + H2O = (R,R)-2-(9Z-octadecenoyl)-sn-glycero-3-phospho-(3'-sn-glycerol) + (9Z)-octadecenoate + H(+). Lipase that preferentially hydrolysis medium-chain saturated monoacylglycerols including 2-arachidonoylglycerol. Through 2-arachidonoylglycerol degradation may regulate endocannabinoid signaling pathways. Also has a lysophosphatidyl lipase activity with a preference for lysophosphatidylglycerol among other lysophospholipids. Also able to degrade bis(monoacylglycero)phosphate (BMP) and constitutes the major enzyme for BMP catabolism. BMP, also known as lysobisphosphatidic acid, is enriched in late endosomes and lysosomes and plays a key role in the formation of intraluminal vesicles and in lipid sorting. The protein is Monoacylglycerol lipase ABHD6 of Rattus norvegicus (Rat).